The following is a 475-amino-acid chain: Ribulose bisphosphate carboxylase large chain (475 aa).

Residues Met1–Ser2 constitute a propeptide that is removed on maturation. Pro3 bears the N-acetylproline mark. Lys14 is modified (N6,N6,N6-trimethyllysine). Substrate is bound by residues Asn123 and Thr173. The Proton acceptor role is filled by Lys175. Substrate is bound at residue Lys177. 3 residues coordinate Mg(2+): Lys201, Asp203, and Glu204. An N6-carboxylysine modification is found at Lys201. His294 functions as the Proton acceptor in the catalytic mechanism. Substrate-binding residues include Arg295, His327, and Ser379.

The protein belongs to the RuBisCO large chain family. Type I subfamily. Heterohexadecamer of 8 large chains and 8 small chains; disulfide-linked. The disulfide link is formed within the large subunit homodimers. Mg(2+) is required as a cofactor. The disulfide bond which can form in the large chain dimeric partners within the hexadecamer appears to be associated with oxidative stress and protein turnover.

Its subcellular location is the plastid. The protein resides in the chloroplast. The enzyme catalyses 2 (2R)-3-phosphoglycerate + 2 H(+) = D-ribulose 1,5-bisphosphate + CO2 + H2O. It carries out the reaction D-ribulose 1,5-bisphosphate + O2 = 2-phosphoglycolate + (2R)-3-phosphoglycerate + 2 H(+). RuBisCO catalyzes two reactions: the carboxylation of D-ribulose 1,5-bisphosphate, the primary event in carbon dioxide fixation, as well as the oxidative fragmentation of the pentose substrate in the photorespiration process. Both reactions occur simultaneously and in competition at the same active site. The sequence is that of Ribulose bisphosphate carboxylase large chain from Stellaria media (Common chickweed).